Consider the following 549-residue polypeptide: Myotubularin-related protein 9 (549 aa).

Met1 carries the N-acetylmethionine modification. One can recognise a GRAM domain in the interval 4-99 (AELIKTPRVD…LNIASSIEAL (96 aa)). A Myotubularin phosphatase domain is found at 123–498 (GWHSFLPEQE…QSLQLWEGIF (376 aa)). Residues 508-542 (LDEAYEEMVNIIEYNKELQAKVNLLRRQLAELETE) are a coiled coil. At Ser548 the chain carries Phosphoserine.

This sequence belongs to the protein-tyrosine phosphatase family. Non-receptor class myotubularin subfamily. In terms of assembly, homodimer. Heterodimer (via C-terminus) with lipid phosphatase MTMR6 (via C-terminus). Heterodimer (via coiled coil domain) with lipid phosphatase MTMR7 (via C-terminus). Heterodimer with lipid phosphatase MTMR8.

The protein localises to the cytoplasm. It localises to the cell projection. Its subcellular location is the ruffle membrane. The protein resides in the perinuclear region. It is found in the endoplasmic reticulum. In terms of biological role, acts as an adapter for myotubularin-related phosphatases. Increases lipid phosphatase MTMR6 catalytic activity, specifically towards phosphatidylinositol 3,5-bisphosphate, and MTMR6 binding affinity for phosphorylated phosphatidylinositols. Positively regulates lipid phosphatase MTMR7 catalytic activity. Increases MTMR8 catalytic activity towards phosphatidylinositol 3-phosphate. The formation of the MTMR6-MTMR9 complex, stabilizes both MTMR6 and MTMR9 protein levels. Stabilizes MTMR8 protein levels. Plays a role in the late stages of macropinocytosis possibly by regulating MTMR6-mediated dephosphorylation of phosphatidylinositol 3-phosphate in membrane ruffles. Negatively regulates autophagy, in part via its association with MTMR8. Negatively regulates DNA damage-induced apoptosis, in part via its association with MTMR6. Does not bind mono-, di- and tri-phosphorylated phosphatidylinositols, phosphatidic acid and phosphatidylserine. The protein is Myotubularin-related protein 9 (MTMR9) of Bos taurus (Bovine).